The following is a 362-amino-acid chain: Glutamine synthetase (362 aa).

Residues 26–107 form the GS beta-grasp domain; that stretch reads LIAEYIWIDS…VLSECWNADG (82 aa). A GS catalytic domain is found at 114–362; it reads HRHEAAKLME…METCFGAVSE (249 aa).

Belongs to the glutamine synthetase family. In terms of assembly, homooctamer.

It localises to the cytoplasm. It carries out the reaction L-glutamate + NH4(+) + ATP = L-glutamine + ADP + phosphate + H(+). This chain is Glutamine synthetase (gln-1), found in Neurospora crassa (strain ATCC 24698 / 74-OR23-1A / CBS 708.71 / DSM 1257 / FGSC 987).